Here is a 460-residue protein sequence, read N- to C-terminus: ATP synthase subunit beta (460 aa).

150–157 (GGAGVGKT) serves as a coordination point for ATP.

Belongs to the ATPase alpha/beta chains family. In terms of assembly, F-type ATPases have 2 components, CF(1) - the catalytic core - and CF(0) - the membrane proton channel. CF(1) has five subunits: alpha(3), beta(3), gamma(1), delta(1), epsilon(1). CF(0) has three main subunits: a(1), b(2) and c(9-12). The alpha and beta chains form an alternating ring which encloses part of the gamma chain. CF(1) is attached to CF(0) by a central stalk formed by the gamma and epsilon chains, while a peripheral stalk is formed by the delta and b chains.

Its subcellular location is the cell inner membrane. The catalysed reaction is ATP + H2O + 4 H(+)(in) = ADP + phosphate + 5 H(+)(out). Produces ATP from ADP in the presence of a proton gradient across the membrane. The catalytic sites are hosted primarily by the beta subunits. This Edwardsiella ictaluri (strain 93-146) protein is ATP synthase subunit beta.